The chain runs to 225 residues: MGPKATSGTRGRGKKVGTKTAAPLPKYKDLIVEAVVSLAERGGSSRQAIKKFIRDKYAVGAKFDGQFNLAVKRGLEAGELAQPKGPAGSIKLLKKAAQPKPEEAKRAAKPAKRVVKAAKPAKAKPAKAAKAAKPAKPVKAAKAASAVKPAARKLAKPVVKKVGSKKVATKNAVVGKKSVVSSAASKKLLAKKAVPKKTAGRKPLVGKKVVAVSRKPAAKKLAKSA.

The interval Met-1–Thr-20 is disordered. Residues Pro-23–Lys-94 form the H15 domain. Positions Lys-95–Val-147 are disordered. Basic residues predominate over residues Ala-107–Lys-127. The segment covering Ala-128–Val-147 has biased composition (low complexity).

This sequence belongs to the histone H1/H5 family.

Its subcellular location is the nucleus. The protein resides in the chromosome. Its function is as follows. Could act as an H1-type linker histone. In Eremothecium gossypii (strain ATCC 10895 / CBS 109.51 / FGSC 9923 / NRRL Y-1056) (Yeast), this protein is Histone H1 (HHOA).